Reading from the N-terminus, the 38-residue chain is Mu-agatoxin-Hc1b (38 aa).

Cystine bridges form between Cys-3-Cys-19, Cys-10-Cys-24, Cys-18-Cys-34, and Cys-26-Cys-32. Residue Ser-38 is modified to Serine amide.

The protein belongs to the neurotoxin 07 (Beta/delta-agtx) family. 02 (aga-3) subfamily. As to expression, expressed by the venom gland.

It is found in the secreted. Insecticidal neurotoxin that induces irreversible neuromuscular blockade in house crickets (A.domesticus). Modifies presynaptic voltage-gated sodium channels (Nav), causing them to open at the normal resting potential of the nerve. This leads to spontaneous release of neurotransmitter and repetitive action potentials in motor neurons. In Hololena curta (Funnel-web spider), this protein is Mu-agatoxin-Hc1b.